We begin with the raw amino-acid sequence, 109 residues long: Cell division suppressor protein YneA (109 aa).

Residues 39-90 (SEVNVSEGDSLWALADQYAGKSDMAKADFVSWVEKENNLADGHVEAGESVVI) form the LysM domain.

The protein belongs to the YneA family.

It localises to the cytoplasm. Its function is as follows. Inhibits cell division during the SOS response. Affects a later stage of the cell division protein assembly, after the assembly of the Z ring, by probably suppressing recruitment of FtsL and/or DivIC to the division machinery. The sequence is that of Cell division suppressor protein YneA from Listeria monocytogenes serotype 4b (strain F2365).